A 204-amino-acid chain; its full sequence is uncharacterized protein (204 aa).

A signal peptide spans 1–16; it reads MKYTFLAVLSAVTVLA.

The protein resides in the secreted. This is an uncharacterized protein from Arthroderma benhamiae (strain ATCC MYA-4681 / CBS 112371) (Trichophyton mentagrophytes).